Reading from the N-terminus, the 229-residue chain is Cytochrome c oxidase subunit 2 (229 aa).

The Mitochondrial intermembrane segment spans residues 1-26 (MATWSNLGLQDSASPLMEQLNFFHDH). A helical membrane pass occupies residues 27 to 48 (TLLILIMITILVGYLMLMLFFN). Residues 49–62 (KFTNRFLLHGQTIE) are Mitochondrial matrix-facing. Residues 63–82 (IIWTILPAIVLMFIALPSLR) traverse the membrane as a helical segment. Over 83–229 (ILYLLDEINS…IKWITAMNSN (147 aa)) the chain is Mitochondrial intermembrane. Positions 161, 196, 198, 200, 204, and 207 each coordinate Cu cation. E198 provides a ligand contact to Mg(2+).

It belongs to the cytochrome c oxidase subunit 2 family. In terms of assembly, component of the cytochrome c oxidase (complex IV, CIV), a multisubunit enzyme composed of a catalytic core of 3 subunits and several supernumerary subunits. The complex exists as a monomer or a dimer and forms supercomplexes (SCs) in the inner mitochondrial membrane with ubiquinol-cytochrome c oxidoreductase (cytochrome b-c1 complex, complex III, CIII). It depends on Cu cation as a cofactor.

Its subcellular location is the mitochondrion inner membrane. The enzyme catalyses 4 Fe(II)-[cytochrome c] + O2 + 8 H(+)(in) = 4 Fe(III)-[cytochrome c] + 2 H2O + 4 H(+)(out). In terms of biological role, component of the cytochrome c oxidase, the last enzyme in the mitochondrial electron transport chain which drives oxidative phosphorylation. The respiratory chain contains 3 multisubunit complexes succinate dehydrogenase (complex II, CII), ubiquinol-cytochrome c oxidoreductase (cytochrome b-c1 complex, complex III, CIII) and cytochrome c oxidase (complex IV, CIV), that cooperate to transfer electrons derived from NADH and succinate to molecular oxygen, creating an electrochemical gradient over the inner membrane that drives transmembrane transport and the ATP synthase. Cytochrome c oxidase is the component of the respiratory chain that catalyzes the reduction of oxygen to water. Electrons originating from reduced cytochrome c in the intermembrane space (IMS) are transferred via the dinuclear copper A center (CU(A)) of subunit 2 and heme A of subunit 1 to the active site in subunit 1, a binuclear center (BNC) formed by heme A3 and copper B (CU(B)). The BNC reduces molecular oxygen to 2 water molecules using 4 electrons from cytochrome c in the IMS and 4 protons from the mitochondrial matrix. This is Cytochrome c oxidase subunit 2 (COII) from Simulium vittatum (Striped black fly).